A 95-amino-acid chain; its full sequence is Large ribosomal subunit protein bL25 (95 aa).

This sequence belongs to the bacterial ribosomal protein bL25 family. As to quaternary structure, part of the 50S ribosomal subunit; part of the 5S rRNA/L5/L18/L25 subcomplex. Contacts the 5S rRNA. Binds to the 5S rRNA independently of L5 and L18.

In terms of biological role, this is one of the proteins that binds to the 5S RNA in the ribosome where it forms part of the central protuberance. This chain is Large ribosomal subunit protein bL25, found in Mannheimia succiniciproducens (strain KCTC 0769BP / MBEL55E).